Consider the following 331-residue polypeptide: MAVNLKGRSFLTLKDFTPAEIRYLLDLSHDLKAKKRAGILGDSLKGKNVVLLFEKTSTRTRCAFECGAAEEGAHVTFLTNSQMGKKESIEDTAKVLGRMYDGIEFRGFKQSTVEELAKHAGVPVWNGLTDADHPTQILADFLTIEEHAHKPLSEIKLVFTGDTRNNMSYALMYGAAKMGMHFVALGPDSLKPDEDILKEMQEYSKETGATIEFSSNVDEAVKGADVIYTDIWVSMGEDESLYPERVKLLTPYKVTREMMNKTGNKNTLFMHCLPSFHDEDTEVCKDMMDRLGLDIREVEDEVFRSKNSVVFDEAENRMHTIKAVMVATAGK.

Carbamoyl phosphate is bound by residues 57 to 60 (STRT), Gln82, Arg106, and 133 to 136 (HPTQ). L-ornithine-binding positions include Asn166, Asp230, and 234–235 (SM). Carbamoyl phosphate contacts are provided by residues 272-273 (CL) and Arg317.

This sequence belongs to the aspartate/ornithine carbamoyltransferase superfamily. OTCase family.

Its subcellular location is the cytoplasm. It catalyses the reaction carbamoyl phosphate + L-ornithine = L-citrulline + phosphate + H(+). It functions in the pathway amino-acid degradation; L-arginine degradation via ADI pathway; carbamoyl phosphate from L-arginine: step 2/2. Its function is as follows. Reversibly catalyzes the transfer of the carbamoyl group from carbamoyl phosphate (CP) to the N(epsilon) atom of ornithine (ORN) to produce L-citrulline. In Clostridium perfringens (strain SM101 / Type A), this protein is Ornithine carbamoyltransferase.